The sequence spans 1009 residues: Putative receptor-like protein 8 (1009 aa).

The signal sequence occupies residues 1-22; the sequence is MKTNFVILLLLLCVFAISPSQQ. The Extracellular segment spans residues 23–961; the sequence is EEINQHNPGI…EEDDEAPVDM (939 aa). N-linked (GlcNAc...) asparagine glycosylation is found at asparagine 159 and asparagine 197. The stretch at 204 to 231 is one LRR 1; degenerate repeat; sequence FEEVRSLELSAGLNGFVDNVEGYKSLRK. LRR repeat units follow at residues 232-255, 257-281, 282-305, 306-329, 331-354, 355-377, 379-402, 404-427, 442-465, 466-490, 492-514, 515-538, 540-565, 567-587, 588-612, 613-636, 638-660, 662-681, 682-705, 707-728, 729-752, 819-842, 843-866, 867-891, and 893-916; these read LKNLEILDLSYNNRFNNNILPFIN, ATSLTSLSLQNNSMEGPFPFEEIKD, LTNLKLLDLSRNILKGPMQGLTHL, KKLKALDLSNNVFSSIMELQVVCE, KNLWELDLRENKFVGQLPLCLGRL, NKLRVLDLSSNQLNGNLPSTFNR, ESLEYLSLLDNNFTGFFSFDPLAN, TKLKVFKLSSTSDMLQIKTESEPK, LEKIPSFLLQDNLFTIFQMPATIV, HELQFLDFSVNDISGLLPDNIGYAL, NLLRMNGSRNGFQGHLPSSMGEM, VNITSLDLSYNNFSGKLPRRFVTG, FSLKHLKLSHNNFSGHFLPRETSFTS, EELRVDSNSFTGKIGVGLLSS, NTTLSVLDMSNNFLTGDIPSWMSNL, SGLTILSISNNFLEGTIPPSLLAI, FLSLIDLSGNLLSGSLPSRVGGE, GIKLFLHDNMLTGPIPDTLL, EKVQILDLRYNQLSGSIPQFVNTE, IYILLMKGNNLTGSMSRQLCDL, RNIRLLDLSDNKLNGFIPSCLYNL, LDYMYGMDLSSNELSGVIPAELGS, LSKLRVMNLSCNFLSSSIPSSFSN, LKDIESLDLSHNMLQGSIPQQLTNL, and SLVVFDVSYNNLSGIIPQGRQFNT. Asparagine 267 carries an N-linked (GlcNAc...) asparagine glycan. N-linked (GlcNAc...) asparagine glycosylation is found at asparagine 390 and asparagine 402. Residues asparagine 497, asparagine 516, asparagine 526, and asparagine 551 are each glycosylated (N-linked (GlcNAc...) asparagine). N-linked (GlcNAc...) asparagine glycans are attached at residues asparagine 588 and asparagine 611. 2 N-linked (GlcNAc...) asparagine glycosylation sites follow: asparagine 716 and asparagine 751. N-linked (GlcNAc...) asparagine glycans are attached at residues asparagine 850, asparagine 890, asparagine 903, and asparagine 934. Residues 934–955 form a disordered region; it reads NRSCDAKKTSDESENGGEEEDD. The segment covering 945–955 has biased composition (acidic residues); it reads ESENGGEEEDD. The chain crosses the membrane as a helical span at residues 962 to 982; sequence LAFYFSSASTYVTTLIGIFIL. Topologically, residues 983–1009 are cytoplasmic; that stretch reads MCFDCPLRRAWLRIVDASIASVKSMLP.

This sequence belongs to the RLP family.

Its subcellular location is the cell membrane. This Arabidopsis thaliana (Mouse-ear cress) protein is Putative receptor-like protein 8.